Consider the following 183-residue polypeptide: Ferritin heavy chain (183 aa).

N-acetylmethionine is present on Met-1. Thr-2 is subject to N-acetylthreonine; in Ferritin heavy chain, N-terminally processed. The region spanning 11–160 (QNYHQDSEAA…DHVTNLRKMG (150 aa)) is the Ferritin-like diiron domain. Glu-28, Glu-63, His-66, Glu-108, and Gln-142 together coordinate Fe cation. Residues Ser-179 and Ser-183 each carry the phosphoserine modification.

Belongs to the ferritin family. In terms of assembly, oligomer of 24 subunits. There are two types of subunits: L (light) chain and H (heavy) chain. The major chain can be light or heavy, depending on the species and tissue type. The functional molecule forms a roughly spherical shell with a diameter of 12 nm and contains a central cavity into which the insoluble mineral iron core is deposited. Interacts with NCOA4; NCOA4 promotes targeting of the iron-binding ferritin complex to autolysosomes following starvation or iron depletion.

Its subcellular location is the cytoplasm. It localises to the lysosome. It is found in the cytoplasmic vesicle. The protein resides in the autophagosome. The enzyme catalyses 4 Fe(2+) + O2 + 4 H(+) = 4 Fe(3+) + 2 H2O. Functionally, stores iron in a soluble, non-toxic, readily available form. Important for iron homeostasis. Has ferroxidase activity. Iron is taken up in the ferrous form and deposited as ferric hydroxides after oxidation. Also plays a role in delivery of iron to cells. Mediates iron uptake in capsule cells of the developing kidney. Delivery to lysosomes is mediated by the cargo receptor NCOA4 for autophagic degradation and release of iron. The chain is Ferritin heavy chain (FTH1) from Canis lupus familiaris (Dog).